The primary structure comprises 164 residues: Ribosome maturation factor RimP (164 aa).

This sequence belongs to the RimP family.

It localises to the cytoplasm. Required for maturation of 30S ribosomal subunits. The chain is Ribosome maturation factor RimP from Mesoplasma florum (strain ATCC 33453 / NBRC 100688 / NCTC 11704 / L1) (Acholeplasma florum).